Reading from the N-terminus, the 380-residue chain is Homoserine O-acetyltransferase (380 aa).

The AB hydrolase-1 domain occupies 59 to 363 (NVVMVLHALT…IYGHDGFLVE (305 aa)). The active-site Nucleophile is the serine 164. Arginine 234 provides a ligand contact to substrate. Residues aspartate 327 and histidine 357 contribute to the active site. Aspartate 358 lines the substrate pocket.

This sequence belongs to the AB hydrolase superfamily. MetX family. Homodimer.

The protein localises to the cytoplasm. The enzyme catalyses L-homoserine + acetyl-CoA = O-acetyl-L-homoserine + CoA. Its pathway is amino-acid biosynthesis; L-methionine biosynthesis via de novo pathway; O-acetyl-L-homoserine from L-homoserine: step 1/1. Transfers an acetyl group from acetyl-CoA to L-homoserine, forming acetyl-L-homoserine. This is Homoserine O-acetyltransferase from Mycolicibacterium smegmatis (strain ATCC 700084 / mc(2)155) (Mycobacterium smegmatis).